Here is an 89-residue protein sequence, read N- to C-terminus: SAP domain-containing new25 (89 aa).

The region spanning 44–78 is the SAP domain; sequence PSQWSKKQLIEYCKKNSLKTSGSHEELVIRVQNHL.

This chain is SAP domain-containing new25 (new25), found in Schizosaccharomyces pombe (strain 972 / ATCC 24843) (Fission yeast).